Here is a 940-residue protein sequence, read N- to C-terminus: Fibronectin-binding protein B (940 aa).

Residues 1-36 (MKSNLRYGIRKHKLGAASVFLGTMIVVGMGQEKEAA) form the signal peptide. Residues 36 to 111 (AASEQNNTTV…PKVETSRVDL (76 aa)) form a disordered region. Polar residues predominate over residues 38 to 92 (SEQNNTTVEESGSSATESKASETQTTTNNVNTIDETQSYSATSTEQPSQSTQVTT). A fibrinogen/elastin/tropoelastin-binding region spans residues 162 to 480 (TGTDVTNKVE…AQGDGKDKLK (319 aa)). Disordered regions lie at residues 676–746 (LGYE…NIID), 764–878 (IIEE…GKVV), and 892–918 (VPTKKAQSKKSELPETGGEESTNNGML). Residues 681–718 (GQNSGNQSFEEDTEEDKPKYEQGGNIVDIDFDSVPQIH) form a D-1 repeat. The stretch at 719 to 756 (GQNNGNQSFEEDTEKDKPKYEQGGNIIDIDFDSVPHIH) is one D-2 repeat. A D-3 repeat occupies 757–795 (GFNKHTEIIEEDTNKDKPNYQFGGHNSVDFEEDTLPQVS). Basic and acidic residues predominate over residues 764 to 774 (IIEEDTNKDKP). Residues 792–802 (PQVSGHNEGQQ) show a composition bias toward polar residues. One copy of the D-4; truncated repeat lies at 796–814 (GHNEGQQTIEEDTTPPIVP). A compositionally biased stretch (pro residues) spans 811–860 (PIVPPTPPTPEVPSEPETPTPPTPEVPSEPETPTPPTPEVPTEPGKPIPP). 3 WR repeats span residues 815 to 828 (PTPPTPEVPSEPET), 829 to 842 (PTPPTPEVPSEPET), and 857 to 870 (PIPPAKEEPKKPSK). The LPXTG sorting signal motif lies at 904–908 (LPETG). Pentaglycyl murein peptidoglycan amidated threonine is present on threonine 907. Positions 908–940 (GGEESTNNGMLFGGLFSILGLALLRRNKKNHKA) are cleaved as a propeptide — removed by sortase.

As to quaternary structure, interacts with host PLG; this interaction provides active plasmin on the surface of bacteria cells. Interacts with host histones.

It is found in the secreted. The protein localises to the cell wall. Functionally, multifunctional protein which promotes bacterial attachment to fibrinogen, elastin and fibronectin. Also promotes the accumulation phase and the primary attachment phase of biofilm formation. In addition, protects against the antimicrobial activity of histones. Mechanistically, captures histones and prevents them from reaching the bacterial membrane and simultaneously binds plasminogen, thereby promoting its conversion to plasmin to destroy the bound histones. This Staphylococcus aureus (strain USA300) protein is Fibronectin-binding protein B.